The chain runs to 269 residues: Small ribosomal subunit protein uS2 (269 aa).

Positions 228–269 are disordered; sequence ARAERQAAAAKDAAGDTGKSEADAEAVKAEAAAEEKAETTEA. Residues 233 to 244 are compositionally biased toward low complexity; the sequence is QAAAAKDAAGDT. Residues 245–269 are compositionally biased toward basic and acidic residues; sequence GKSEADAEAVKAEAAAEEKAETTEA.

This sequence belongs to the universal ribosomal protein uS2 family.

The sequence is that of Small ribosomal subunit protein uS2 from Corynebacterium urealyticum (strain ATCC 43042 / DSM 7109).